The sequence spans 148 residues: Prefoldin subunit alpha (148 aa).

The protein belongs to the prefoldin subunit alpha family. In terms of assembly, heterohexamer of two alpha and four beta subunits.

The protein resides in the cytoplasm. Molecular chaperone capable of stabilizing a range of proteins. Seems to fulfill an ATP-independent, HSP70-like function in archaeal de novo protein folding. This Pyrococcus horikoshii (strain ATCC 700860 / DSM 12428 / JCM 9974 / NBRC 100139 / OT-3) protein is Prefoldin subunit alpha (pfdA).